The chain runs to 179 residues: Deoxyuridine 5'-triphosphate nucleotidohydrolase (179 aa).

Substrate-binding positions include arginine 90–glycine 92, asparagine 103, threonine 107–aspartate 109, and lysine 117.

Belongs to the dUTPase family. Requires Mg(2+) as cofactor.

It carries out the reaction dUTP + H2O = dUMP + diphosphate + H(+). The protein operates within pyrimidine metabolism; dUMP biosynthesis; dUMP from dCTP (dUTP route): step 2/2. Its function is as follows. This enzyme is involved in nucleotide metabolism: it produces dUMP, the immediate precursor of thymidine nucleotides and it decreases the intracellular concentration of dUTP so that uracil cannot be incorporated into DNA. This is Deoxyuridine 5'-triphosphate nucleotidohydrolase from Thermobifida fusca (strain YX).